The sequence spans 185 residues: Large ribosomal subunit protein uL5 (185 aa).

Belongs to the universal ribosomal protein uL5 family. In terms of assembly, part of the 50S ribosomal subunit; part of the 5S rRNA/L5/L18/L25 subcomplex. Contacts the 5S rRNA and the P site tRNA. Forms a bridge to the 30S subunit in the 70S ribosome.

In terms of biological role, this is one of the proteins that bind and probably mediate the attachment of the 5S RNA into the large ribosomal subunit, where it forms part of the central protuberance. In the 70S ribosome it contacts protein S13 of the 30S subunit (bridge B1b), connecting the 2 subunits; this bridge is implicated in subunit movement. Contacts the P site tRNA; the 5S rRNA and some of its associated proteins might help stabilize positioning of ribosome-bound tRNAs. The sequence is that of Large ribosomal subunit protein uL5 from Caulobacter vibrioides (strain NA1000 / CB15N) (Caulobacter crescentus).